Consider the following 535-residue polypeptide: BAR/IMD domain-containing adapter protein 2 (535 aa).

One can recognise an IMD domain in the interval 1 to 250; it reads MSLSRSEEMH…AQLMQQMANS (250 aa). Residues 1–251 are a coiled coil; sequence MSLSRSEEMH…QLMQQMANSN (251 aa). Ser-262, Ser-324, Ser-326, and Ser-337 each carry phosphoserine. The interval 308-370 is disordered; the sequence is SEDYNPWADR…TLPRSSSMAA (63 aa). The span at 321–335 shows a compositional bias: low complexity; it reads QPKSLSPPQSQSKLS. Residue Thr-341 is modified to Phosphothreonine. Ser-347 is modified (phosphoserine). A compositionally biased stretch (polar residues) spans 349 to 368; it reads TPKNSYATTENKTLPRSSSM. Position 361 is a phosphothreonine (Thr-361). Ser-367, Ser-385, Ser-396, and Ser-455 each carry phosphoserine. In terms of domain architecture, SH3 spans 375–438; it reads NGRMRVKAIF…PFSYTRVLDS (64 aa). The segment at 445-486 is disordered; the sequence is HMSLQQGKSSSTGNLLDKDDLALPPPDYGTSSRAFPSQTAGT. 2 stretches are compositionally biased toward polar residues: residues 447–458 and 473–486; these read SLQQGKSSSTGN and GTSSRAFPSQTAGT.

As to quaternary structure, homodimer. Interacts with CDC42 and RAC1 that have been activated by GTP binding. Binds TIAM1. Interacts with ATN1, ADGRB1, DIAPH1, EPS8, SHANK1, SHANK2, SHANK3, WASF1 and WASF2. Interacts with ENAH after recruitment of CDC42. Post-translationally, phosphorylated on tyrosine residues by INSR in response to insulin treatment. As to expression, ubiquitous.

The protein localises to the cytoplasm. Its subcellular location is the membrane. It localises to the cell projection. The protein resides in the filopodium. It is found in the ruffle. The protein localises to the cytoskeleton. Functionally, adapter protein that links membrane-bound small G-proteins to cytoplasmic effector proteins. Necessary for CDC42-mediated reorganization of the actin cytoskeleton and for RAC1-mediated membrane ruffling. Involved in the regulation of the actin cytoskeleton by WASF family members and the Arp2/3 complex. Plays a role in neurite growth. Acts syngeristically with ENAH to promote filipodia formation. Plays a role in the reorganization of the actin cytoskeleton in response to bacterial infection. Participates in actin bundling when associated with EPS8, promoting filopodial protrusions. This chain is BAR/IMD domain-containing adapter protein 2 (Baiap2), found in Rattus norvegicus (Rat).